The following is a 332-amino-acid chain: RNA polymerase principal sigma factor HrdD (332 aa).

A compositionally biased stretch (basic residues) spans M1 to S11. The segment at M1–A25 is disordered. Low complexity predominate over residues A13–S22. The Polymerase core binding motif lies at D124–V137. Residues L294–K313 constitute a DNA-binding region (H-T-H motif).

It belongs to the sigma-70 factor family. As to quaternary structure, interacts transiently with the RNA polymerase catalytic core.

In terms of biological role, sigma factors are initiation factors that promote the attachment of RNA polymerase to specific initiation sites and are then released. This is RNA polymerase principal sigma factor HrdD (hrdD) from Streptomyces coelicolor (strain ATCC BAA-471 / A3(2) / M145).